A 101-amino-acid polypeptide reads, in one-letter code: NAD(P)H-quinone oxidoreductase subunit 4L, chloroplastic (101 aa).

3 helical membrane passes run 2-22, 32-52, and 61-81; these read ILEHVLVLSAYLFFIGLYGLI, MCLELILNAVNMNFVTFSDFF, and IFCIFVIAIAAAEAAIGLAIV.

This sequence belongs to the complex I subunit 4L family. As to quaternary structure, NDH is composed of at least 16 different subunits, 5 of which are encoded in the nucleus.

It localises to the plastid. It is found in the chloroplast thylakoid membrane. The enzyme catalyses a plastoquinone + NADH + (n+1) H(+)(in) = a plastoquinol + NAD(+) + n H(+)(out). The catalysed reaction is a plastoquinone + NADPH + (n+1) H(+)(in) = a plastoquinol + NADP(+) + n H(+)(out). Functionally, NDH shuttles electrons from NAD(P)H:plastoquinone, via FMN and iron-sulfur (Fe-S) centers, to quinones in the photosynthetic chain and possibly in a chloroplast respiratory chain. The immediate electron acceptor for the enzyme in this species is believed to be plastoquinone. Couples the redox reaction to proton translocation, and thus conserves the redox energy in a proton gradient. The polypeptide is NAD(P)H-quinone oxidoreductase subunit 4L, chloroplastic (Aethionema cordifolium (Lebanon stonecress)).